Consider the following 313-residue polypeptide: Foldase protein PrsA (313 aa).

Positions M1–A20 are cleaved as a signal peptide. The N-palmitoyl cysteine moiety is linked to residue C21. Residue C21 is the site of S-diacylglycerol cysteine attachment. The 99-residue stretch at T143–K241 folds into the PpiC domain.

The protein belongs to the PrsA family.

The protein localises to the cell membrane. The catalysed reaction is [protein]-peptidylproline (omega=180) = [protein]-peptidylproline (omega=0). Plays a major role in protein secretion by helping the post-translocational extracellular folding of several secreted proteins. In Streptococcus pneumoniae serotype 4 (strain ATCC BAA-334 / TIGR4), this protein is Foldase protein PrsA.